The primary structure comprises 347 residues: Dolichyl-diphosphooligosaccharide--protein glycosyltransferase subunit TUSC3 (347 aa).

An N-terminal signal peptide occupies residues 1–41; it reads MGARGAPSRRRQAGRRPRYLPTGSFPFLLLLLLLCIQLGGG. Over 42 to 196 the chain is Lumenal; that stretch reads QKKKENLLAE…DVHIRVFRPP (155 aa). In terms of domain architecture, Thioredoxin spans 59-187; the sequence is WSSRRSVFRM…LAKWIADRTD (129 aa). The N-linked (GlcNAc...) asparagine glycan is linked to asparagine 83. A disulfide bond links cysteine 99 and cysteine 102. The chain crosses the membrane as a helical span at residues 197–217; it reads NYSGTIALALLVSLVGGLLYL. The Cytoplasmic segment spans residues 218–221; that stretch reads RRNN. Residues 222–242 form a helical membrane-spanning segment; the sequence is LEFIYNKTGWAMVSLCIVFAM. Residues 243–276 are Lumenal-facing; it reads TSGQMWNHIRGPPYAHKNPHNGQVSYIHGSSQVQ. A helical membrane pass occupies residues 277 to 297; the sequence is FVAESHIILVLNAAITMGMDL. At 298–312 the chain is on the cytoplasmic side; it reads LNEAATSKGDVGKRR. A helical membrane pass occupies residues 313–333; sequence IICLVGLGLVVFFFSFLLSIF. Residues 334–347 are Lumenal-facing; that stretch reads RSKYHGYPYSFLIK.

The protein belongs to the OST3/OST6 family. Accessory component of the STT3B-containing form of the oligosaccharyltransferase (OST) complex. OST exists in two different complex forms which contain common core subunits RPN1, RPN2, OST48, OST4, DAD1 and TMEM258, either STT3A or STT3B as catalytic subunits, and form-specific accessory subunits. OST can form stable complexes with the Sec61 complex or with both the Sec61 and TRAP complexes. The association of TUSC3 or MAGT1 with the STT3B-containing complex seems to be mutually exclusvice.

It localises to the endoplasmic reticulum membrane. The protein operates within protein modification; protein glycosylation. Functionally, acts as accessory component of the N-oligosaccharyl transferase (OST) complex which catalyzes the transfer of a high mannose oligosaccharide from a lipid-linked oligosaccharide donor to an asparagine residue within an Asn-X-Ser/Thr consensus motif in nascent polypeptide chains. Involved in N-glycosylation of STT3B-dependent substrates. Specifically required for the glycosylation of a subset of acceptor sites that are near cysteine residues; in this function seems to act redundantly with MAGT1. In its oxidized form proposed to form transient mixed disulfides with a glycoprotein substrate to facilitate access of STT3B to the unmodified acceptor site. Also has oxidoreductase-independent functions in the STT3B-containing OST complex possibly involving substrate recognition. Could indirectly play a role in Mg(2+) transport. The sequence is that of Dolichyl-diphosphooligosaccharide--protein glycosyltransferase subunit TUSC3 (TUSC3) from Bos taurus (Bovine).